Reading from the N-terminus, the 2381-residue chain is Nipped-B-like protein A (2381 aa).

One copy of the HEAT 1 repeat lies at 85-124; sequence SDELEGDVPVLLQLLMSRNPNIFRNKTAPNTPQYPAQAGI. Disordered stretches follow at residues 131 to 211, 240 to 289, and 329 to 503; these read PPYK…HLQQ, HLLQ…DIVG, and LAAI…ELPP. Positions 138-158 are enriched in polar residues; it reads GSMQGSPASANYQQASMSHSP. Basic and acidic residues-rich tracts occupy residues 254–273 and 333–355; these read GTKDLHLGSQDKQRGQKSSE and ERMESEAAMETERSAKEVQDKDK. The segment covering 373 to 389 has biased composition (gly residues); it reads GTAGSGSGAPGGGGGAN. Positions 451-473 are enriched in basic and acidic residues; sequence VKHEHDHDPEHPHYDDKQPDTPR. Positions 552–565 match the PxVxL motif motif; the sequence is KKSVKPVVVLQKLS. A compositionally biased stretch (basic and acidic residues) spans 570–580; sequence QRLMRERDSRA. Disordered regions lie at residues 570–604 and 629–708; these read QRLMRERDSRASKSGKNRLSSGRSGKGGIDPSVLK and RKRS…NEVA. Residues 581–592 are compositionally biased toward polar residues; sequence SKSGKNRLSSGR. Basic and acidic residues-rich tracts occupy residues 633–642 and 658–694; these read TVNERPKYAE and KDRDRTWEAEERDRRSSGEHRRGNFDARRGSGSRYDD. HEAT repeat units follow at residues 1299-1337, 1375-1413, 1477-1516, and 1843-1881; these read SQSFDIYLTQILRVLGESAIAVRTKAMKCLSEVVAVDPS, PQLTEQYYDMLIERILDTGISVRKRVIKILRDICLEQPN, YDWFEQLLQNLLKSEEDSSYKPTRKACVQLVDNLVEHILK, and LIHPVQCVPYLIAMGTDAEPTMRNKADQQLVEIDKKYTG. 2 disordered regions span residues 2005–2095 and 2228–2271; these read IPGR…DLDD and LLGG…GDSA. The span at 2006 to 2021 shows a compositional bias: basic residues; that stretch reads PGRKSRKRRRRRRRPQ. Residues 2040 to 2056 show a composition bias toward basic and acidic residues; it reads EEERGAQDEERERHSGD. Residues 2057–2068 are compositionally biased toward acidic residues; that stretch reads EEYDDDDYEEDE. A compositionally biased stretch (basic and acidic residues) spans 2077–2086; the sequence is KPTEDIRQSE.

Belongs to the SCC2/Nipped-B family.

It is found in the nucleus. May play a structural role in chromatin. Involved in sister chromatid cohesion, possibly by facilitating the cohesin complex loading. Transcription factor, which may promote cortical neuron migration during brain development by regulating the transcription of crucial genes in this process. The polypeptide is Nipped-B-like protein A (nipbla) (Danio rerio (Zebrafish)).